A 291-amino-acid polypeptide reads, in one-letter code: MKFKKMLTLAAIGLSGFGLVACGNQSAASKQSASGTIEVISRENGSGTRGAFTEITGILKKDGDKKIDNTAKTAVIQNSTEGVLSAVQGNANAIGYISLGSLTKSVKALEIDGVKASRDTVLDGEYPLQRPFNIVWSSNLSKLGQDFISFIHSKQGQQVVTDNKFIEAKTETTEYTSQHLSGKLSVVGSTSVSSLMEKLAEAYKKENPEVTIDITSNGSSAGITAVKEKTADIGMVSRELTPEEGKSLTHDAIALDGIAVVVNNDNKASQVSMAELADVFSGKLTTWDKIK.

Residues 1 to 21 form the signal peptide; that stretch reads MKFKKMLTLAAIGLSGFGLVA. C22 is lipidated: N-palmitoyl cysteine. Residue C22 is the site of S-diacylglycerol cysteine attachment.

The protein belongs to the PstS family. As to quaternary structure, the complex is composed of two ATP-binding proteins (PstB), two transmembrane proteins (PstC and PstA) and a solute-binding protein (PstS).

It is found in the cell membrane. In terms of biological role, part of the ABC transporter complex PstSACB involved in phosphate import. This is Phosphate-binding protein PstS 2 (pstS2) from Streptococcus pneumoniae serotype 4 (strain ATCC BAA-334 / TIGR4).